Consider the following 476-residue polypeptide: Exodeoxyribonuclease 7 large subunit (476 aa).

This sequence belongs to the XseA family. In terms of assembly, heterooligomer composed of large and small subunits.

The protein localises to the cytoplasm. The enzyme catalyses Exonucleolytic cleavage in either 5'- to 3'- or 3'- to 5'-direction to yield nucleoside 5'-phosphates.. Its function is as follows. Bidirectionally degrades single-stranded DNA into large acid-insoluble oligonucleotides, which are then degraded further into small acid-soluble oligonucleotides. This Bartonella bacilliformis (strain ATCC 35685 / KC583 / Herrer 020/F12,63) protein is Exodeoxyribonuclease 7 large subunit.